The primary structure comprises 75 residues: SPbeta prophage-derived uncharacterized protein YomT (75 aa).

The sequence is that of SPbeta prophage-derived uncharacterized protein YomT (yomT) from Bacillus subtilis (strain 168).